Consider the following 185-residue polypeptide: Ribosome-recycling factor (185 aa).

This sequence belongs to the RRF family.

The protein localises to the cytoplasm. Functionally, responsible for the release of ribosomes from messenger RNA at the termination of protein biosynthesis. May increase the efficiency of translation by recycling ribosomes from one round of translation to another. This Hahella chejuensis (strain KCTC 2396) protein is Ribosome-recycling factor.